Here is a 48-residue protein sequence, read N- to C-terminus: Piguamerin (48 aa).

5 cysteine pairs are disulfide-bonded: Cys3-Cys14, Cys8-Cys19, Cys21-Cys41, Cys26-Cys45, and Cys30-Cys47. In terms of domain architecture, Antistasin-like spans 19–47 (CVCVIGQCRKYCPNGFKKDENGCTFPCTC).

The protein belongs to the protease inhibitor I15 (antistasin) family.

It localises to the secreted. In terms of biological role, inhibits plasma and tissue kallikrein, and trypsin. May be involved in leech hematophagia. In Hirudo nipponia (Korean blood-sucking leech), this protein is Piguamerin.